Reading from the N-terminus, the 341-residue chain is Hyaluronan and proteoglycan link protein 2 (341 aa).

An N-terminal signal peptide occupies residues 1-27 (MPSWIPLPAFCCLLLPWAFTVFHKTLG). The 109-residue stretch at 35–143 (PHYLLPPIHE…GIEDESVALT (109 aa)) folds into the Ig-like V-type domain. 5 disulfide bridges follow: Cys58–Cys129, Cys171–Cys241, Cys195–Cys216, Cys266–Cys337, and Cys291–Cys312. Link domains are found at residues 149–243 (VVFP…FCFT) and 246–339 (LAGQ…YCYA).

Belongs to the HAPLN family. As to expression, brain.

It localises to the secreted. The protein resides in the extracellular space. It is found in the extracellular matrix. Mediates a firm binding of versican V2 to hyaluronic acid. May play a pivotal role in the formation of the hyaluronan-associated matrix in the central nervous system (CNS) which facilitates neuronal conduction and general structural stabilization. Binds to hyaluronic acid. The chain is Hyaluronan and proteoglycan link protein 2 (Hapln2) from Rattus norvegicus (Rat).